The primary structure comprises 252 residues: MAKFALGHHREASDAGCVRAVLAELILTFLFVFAGVGSAMATGKLAGGGGDTVVGLTAVALAHTLVVAVMVSAGLHVSGGHINPAVTLGLAATGRITLFRSALYVAAQLLGSTLACLLLAFLAVADSGVPVHALGAGVGALRGVLMEAVLTFSLLFAVYATVVDPRRAVGGMGPLLVGLVVGANVLAGGPFSGASMNPARSFGPALVAGVWADHWVYWVGPLIGGPLAGLVYDGLFMAQGGHEPLPRDDTDF.

The next 2 helical transmembrane spans lie at 20–40 (AVLA…GSAM) and 53–73 (VVGL…MVSA). Residues 83 to 85 (NPA) carry the NPA 1 motif. 3 helical membrane passes run 105–125 (VAAQ…LAVA), 143–163 (GVLM…ATVV), and 168–188 (AVGG…VLAG). An NPA 2 motif is present at residues 197–199 (NPA). A helical transmembrane segment spans residues 216 to 236 (VYWVGPLIGGPLAGLVYDGLF).

The protein belongs to the MIP/aquaporin (TC 1.A.8) family. TIP (TC 1.A.8.10) subfamily.

It is found in the vacuole membrane. Aquaporins facilitate the transport of water and small neutral solutes across cell membranes. This is Aquaporin TIP4-4 (TIP4-4) from Zea mays (Maize).